Consider the following 831-residue polypeptide: V-type proton ATPase subunit a (831 aa).

Topologically, residues 1–418 (MSPSLFRSEE…DSYGIATYRE (418 aa)) are cytoplasmic. Residues 419-437 (VNHGIVAIVTFPFLFAIMF) traverse the membrane as a helical segment. Over 438–439 (GD) the chain is Vacuolar. Residues 440 to 456 (LGHGAIMASVALMFVLY) traverse the membrane as a helical segment. The Cytoplasmic segment spans residues 457–471 (EKTLGAKKDLDEIVG). Residues 472–501 (MVFYGRYIVLLMGLFSMYVGFVYNDLFSKP) form a helical membrane-spanning segment. Residues 502–548 (MSIFSSRWVWPVKSEEAIARAVQVGTYPIGIDPTWHSADNNLLFMNS) lie on the Vacuolar side of the membrane. The helical transmembrane segment at 549 to 568 (YKMKLSIILGVIHMTFCLFL) threads the bilayer. At 569–586 (SLSNYRFFKRKLDIYAVF) the chain is on the cytoplasmic side. Residues 587 to 607 (VPSLIFLEAIFGYLVITIVYK) form a helical membrane-spanning segment. Residues 608–650 (WCIDWKAKDLQPPSLLNMLILMFLSPGTLEDQLYPGQKYLQVG) lie on the Vacuolar side of the membrane. The chain crosses the membrane as a helical span at residues 651-670 (LVIAALICVPWLLIVKPFVL). At 671–723 (WRRHSNEENKYQSLNSDLPNVDEADALMAVDSQEKQAEPFELGEVVIHQVIHT) the chain is on the cytoplasmic side. A helical membrane pass occupies residues 724–748 (IEFCLGCVSHTASYLRLWALSLAHN). The Vacuolar portion of the chain corresponds to 749–769 (QLSSVLWNMTLANGFRMTGIV). A helical transmembrane segment spans residues 770 to 808 (GSIFVVILFGFWFIATCVVLVAMEGTSAMLHSLRLHWVE). The Cytoplasmic portion of the chain corresponds to 809–831 (GMSKHFEGEGYAFTPFTFKVTAE).

It belongs to the V-ATPase 116 kDa subunit family. In terms of assembly, V-ATPase is a heteromultimeric enzyme composed of a peripheral catalytic V1 complex (components A to H) attached to an integral membrane V0 proton pore complex (components: a, c, c', c'', d, e, f and VOA1).

The protein localises to the vacuole membrane. In terms of biological role, subunit of the V0 complex of vacuolar(H+)-ATPase (V-ATPase), a multisubunit enzyme composed of a peripheral complex (V1) that hydrolyzes ATP and a membrane integral complex (V0) that translocates protons. V-ATPase is responsible for acidifying and maintaining the pH of intracellular compartments. This is V-type proton ATPase subunit a (vph1) from Schizosaccharomyces pombe (strain 972 / ATCC 24843) (Fission yeast).